A 393-amino-acid chain; its full sequence is Elongation factor Tu (393 aa).

Positions 10–203 (KPHVNIGTIG…AVDDYIPEPV (194 aa)) constitute a tr-type G domain. Positions 19 to 26 (GHVDHGKT) are G1. 19–26 (GHVDHGKT) is a binding site for GTP. Thr-26 is a binding site for Mg(2+). A G2 region spans residues 60-64 (GITIS). Residues 81–84 (DCPG) are G3. GTP-binding positions include 81 to 85 (DCPGH) and 136 to 139 (NKVD). Residues 136–139 (NKVD) form a G4 region. The interval 173–175 (SAL) is G5.

The protein belongs to the TRAFAC class translation factor GTPase superfamily. Classic translation factor GTPase family. EF-Tu/EF-1A subfamily. In terms of assembly, monomer.

The protein localises to the cytoplasm. It catalyses the reaction GTP + H2O = GDP + phosphate + H(+). Functionally, GTP hydrolase that promotes the GTP-dependent binding of aminoacyl-tRNA to the A-site of ribosomes during protein biosynthesis. This is Elongation factor Tu from Chlorobium phaeobacteroides (strain BS1).